Consider the following 288-residue polypeptide: Probable ketoamine kinase VP1481 (288 aa).

92–94 is an ATP binding site; the sequence is NYL. Aspartate 195 serves as the catalytic Proton acceptor.

Belongs to the fructosamine kinase family.

Functionally, ketoamine kinase that phosphorylates ketoamines on the third carbon of the sugar moiety to generate ketoamine 3-phosphate. This is Probable ketoamine kinase VP1481 from Vibrio parahaemolyticus serotype O3:K6 (strain RIMD 2210633).